We begin with the raw amino-acid sequence, 785 residues long: (+)-copalyl diphosphate synthase 3, chloroplastic (785 aa).

Lys238 contacts substrate. The Mg(2+) site is built by Asp371 and Asp373. The DXDD motif signature appears at 371–374 (DIDD). Substrate is bound at residue Lys457.

Belongs to the terpene synthase family. Mg(2+) serves as cofactor. In terms of tissue distribution, present in both leaves and flowers, with higher levels in leaves.

It localises to the plastid. The protein resides in the chloroplast. It catalyses the reaction (2E,6E,10E)-geranylgeranyl diphosphate = (+)-copalyl diphosphate. It participates in secondary metabolite biosynthesis; terpenoid biosynthesis. Functionally, involved in the biosynthesis of labdane-type diterpenoid including marrubiin and other labdane-related furanoid diterpenoids with potential applications as anti-diabetics, analgesics or vasorelaxants. Terpene synthase that produces (+)-copalyl diphosphate ((+)-CPP) from geranylgeranyl diphosphate (GGPP). The sequence is that of (+)-copalyl diphosphate synthase 3, chloroplastic from Marrubium vulgare (White horehound).